The primary structure comprises 136 residues: Ribonuclease P protein component (136 aa).

The tract at residues 39–59 (LPDVSSSKPARDTGAEQTSAP) is disordered.

Belongs to the RnpA family. As to quaternary structure, consists of a catalytic RNA component (M1 or rnpB) and a protein subunit.

It carries out the reaction Endonucleolytic cleavage of RNA, removing 5'-extranucleotides from tRNA precursor.. RNaseP catalyzes the removal of the 5'-leader sequence from pre-tRNA to produce the mature 5'-terminus. It can also cleave other RNA substrates such as 4.5S RNA. The protein component plays an auxiliary but essential role in vivo by binding to the 5'-leader sequence and broadening the substrate specificity of the ribozyme. In Salinispora tropica (strain ATCC BAA-916 / DSM 44818 / JCM 13857 / NBRC 105044 / CNB-440), this protein is Ribonuclease P protein component.